The sequence spans 483 residues: Cobyric acid synthase (483 aa).

A GATase cobBQ-type domain is found at 251–438; that stretch reads SLVVAVPMLP…LHGVFNADEF (188 aa). Cys-333 serves as the catalytic Nucleophile. His-430 is a catalytic residue.

The protein belongs to the CobB/CobQ family. CobQ subfamily.

It functions in the pathway cofactor biosynthesis; adenosylcobalamin biosynthesis. Its function is as follows. Catalyzes amidations at positions B, D, E, and G on adenosylcobyrinic A,C-diamide. NH(2) groups are provided by glutamine, and one molecule of ATP is hydrogenolyzed for each amidation. The chain is Cobyric acid synthase from Brucella anthropi (strain ATCC 49188 / DSM 6882 / CCUG 24695 / JCM 21032 / LMG 3331 / NBRC 15819 / NCTC 12168 / Alc 37) (Ochrobactrum anthropi).